The primary structure comprises 65 residues: UPF0434 protein HSM_0997 (65 aa).

It belongs to the UPF0434 family.

This chain is UPF0434 protein HSM_0997, found in Histophilus somni (strain 2336) (Haemophilus somnus).